Consider the following 210-residue polypeptide: Redox-sensing transcriptional repressor Rex (210 aa).

A DNA-binding region (H-T-H motif) is located at residues 17–56 (KYHRYLGNLMRNDVDRISSKELSEKIGFTASQIRQDLNCF). NAD(+) is bound at residue 91-96 (GAGNIG).

This sequence belongs to the transcriptional regulatory Rex family. Homodimer.

It localises to the cytoplasm. Its function is as follows. Modulates transcription in response to changes in cellular NADH/NAD(+) redox state. The sequence is that of Redox-sensing transcriptional repressor Rex from Clostridium kluyveri (strain ATCC 8527 / DSM 555 / NBRC 12016 / NCIMB 10680 / K1).